A 389-amino-acid chain; its full sequence is PqqA peptide cyclase (389 aa).

In terms of domain architecture, Radical SAM core spans 20–235 (VGLPLWLLAE…TNEYRARLEA (216 aa)). Residues cysteine 34, cysteine 38, and cysteine 41 each contribute to the [4Fe-4S] cluster site.

The protein belongs to the radical SAM superfamily. PqqE family. In terms of assembly, interacts with PqqD. The interaction is necessary for activity of PqqE. The cofactor is [4Fe-4S] cluster.

The catalysed reaction is [PQQ precursor protein] + S-adenosyl-L-methionine = E-Y cross-linked-[PQQ precursor protein] + 5'-deoxyadenosine + L-methionine + H(+). The protein operates within cofactor biosynthesis; pyrroloquinoline quinone biosynthesis. Catalyzes the cross-linking of a glutamate residue and a tyrosine residue in the PqqA protein as part of the biosynthesis of pyrroloquinoline quinone (PQQ). This Pseudomonas fluorescens (strain ATCC BAA-477 / NRRL B-23932 / Pf-5) protein is PqqA peptide cyclase.